The sequence spans 539 residues: 4-coumarate--CoA ligase 5 (539 aa).

ATP-binding residues include Ser-185, Ser-186, Gly-187, Thr-188, Thr-189, and Lys-193. Tyr-235 and Ser-239 together coordinate (E)-4-coumaroyl-AMP. Arg-256 is a binding site for CoA. The interval 258–327 is SBD1; the sequence is DTVKMLQLVE…AKLPNAVLGQ (70 aa). The (E)-4-coumaroyl-AMP site is built by Ala-305, Gln-327, Gly-328, Thr-332, and Met-340. Residues Gln-327, Gly-328, and Thr-332 each contribute to the ATP site. Residues 328–395 are SBD2; sequence GYGMTEAGPV…IRGKQIMKGY (68 aa). Asp-416 and Arg-431 together coordinate ATP. Residues Lys-433 and Lys-437 each coordinate (E)-4-coumaroyl-AMP. Residues Lys-439 and Gly-440 each contribute to the CoA site. Lys-522 is a binding site for ATP.

Belongs to the ATP-dependent AMP-binding enzyme family. Requires Mg(2+) as cofactor. Expressed in roots, stems, leaf blades, leaf sheaths and spikelets.

The catalysed reaction is (E)-ferulate + ATP + CoA = (E)-feruloyl-CoA + AMP + diphosphate. It carries out the reaction (E)-4-coumarate + ATP + CoA = (E)-4-coumaroyl-CoA + AMP + diphosphate. It catalyses the reaction (E)-sinapate + ATP + CoA = (E)-sinapoyl-CoA + AMP + diphosphate. The enzyme catalyses (E)-caffeate + ATP + CoA = (E)-caffeoyl-CoA + AMP + diphosphate. The catalysed reaction is (E)-cinnamate + ATP + CoA = (E)-cinnamoyl-CoA + AMP + diphosphate. It carries out the reaction (E)-ferulate + ATP + H(+) = (E)-feruloyl-AMP + diphosphate. It catalyses the reaction (E)-feruloyl-AMP + CoA = (E)-feruloyl-CoA + AMP + H(+). The enzyme catalyses (E)-4-coumarate + ATP + H(+) = (E)-4-coumaroyl-AMP + diphosphate. The catalysed reaction is (E)-4-coumaroyl-AMP + CoA = (E)-4-coumaroyl-CoA + AMP + H(+). It carries out the reaction (E)-sinapate + ATP + H(+) = (E)-sinapoyl-AMP + diphosphate. It catalyses the reaction (E)-sinapoyl-AMP + CoA = (E)-sinapoyl-CoA + AMP + H(+). The enzyme catalyses (E)-caffeate + ATP + H(+) = (E)-caffeoyl-AMP + diphosphate. The catalysed reaction is (E)-caffeoyl-AMP + CoA = (E)-caffeoyl-CoA + AMP + H(+). It functions in the pathway phytoalexin biosynthesis; 3,4',5-trihydroxystilbene biosynthesis; 3,4',5-trihydroxystilbene from trans-4-coumarate: step 1/2. Its function is as follows. Involved in the phenylpropanoid metabolism by mediating the activation of a number of hydroxycinnamates for the biosynthesis of monolignols and other phenolic secondary metabolites. Catalyzes the formation of CoA esters of cinnamate, 4-coumarate, caffeate and ferulate. Is also able to convert sinapate to its corresponding CoA ester, a reaction that is rarely observed in 4CL catalysis. Is more efficient with substrates in the following order: ferulate &gt; 4-coumarate &gt; sinapate &gt; caffeate &gt; cinnamate. Follows a two-step reaction mechanism, wherein the carboxylate substrate first undergoes adenylation by ATP, followed by a thioesterification in the presence of CoA to yield the final CoA thioesters. The polypeptide is 4-coumarate--CoA ligase 5 (Oryza sativa subsp. japonica (Rice)).